Here is a 159-residue protein sequence, read N- to C-terminus: Cytochrome b6-f complex subunit 4 (159 aa).

3 helical membrane-spanning segments follow: residues 36–56, 95–115, and 131–151; these read LLYI…GLAV, LLGV…PFLE, and TVFL…TLPI.

Belongs to the cytochrome b family. PetD subfamily. In terms of assembly, the 4 large subunits of the cytochrome b6-f complex are cytochrome b6, subunit IV (17 kDa polypeptide, petD), cytochrome f and the Rieske protein, while the 4 small subunits are petG, petL, petM and petN. The complex functions as a dimer.

It is found in the plastid. Its subcellular location is the chloroplast thylakoid membrane. Functionally, component of the cytochrome b6-f complex, which mediates electron transfer between photosystem II (PSII) and photosystem I (PSI), cyclic electron flow around PSI, and state transitions. This is Cytochrome b6-f complex subunit 4 from Piper cenocladum (Ant piper).